Consider the following 182-residue polypeptide: Ribosome maturation factor RimM (182 aa).

In terms of domain architecture, PRC barrel spans 101-182 (VDEYYWSDLK…RIYVNWGVDY (82 aa)).

Belongs to the RimM family. Binds ribosomal protein uS19.

It localises to the cytoplasm. Its function is as follows. An accessory protein needed during the final step in the assembly of 30S ribosomal subunit, possibly for assembly of the head region. Essential for efficient processing of 16S rRNA. May be needed both before and after RbfA during the maturation of 16S rRNA. It has affinity for free ribosomal 30S subunits but not for 70S ribosomes. This is Ribosome maturation factor RimM from Acinetobacter baylyi (strain ATCC 33305 / BD413 / ADP1).